A 469-amino-acid polypeptide reads, in one-letter code: Putative dipeptidase SE_1424 (469 aa).

His-84 is a Zn(2+) binding site. Asp-86 is a catalytic residue. A Zn(2+)-binding site is contributed by Asp-115. The Proton acceptor role is filled by Glu-149. The Zn(2+) site is built by Glu-150, Asp-173, and His-440.

This sequence belongs to the peptidase M20A family. Zn(2+) serves as cofactor.

This chain is Putative dipeptidase SE_1424, found in Staphylococcus epidermidis (strain ATCC 12228 / FDA PCI 1200).